Consider the following 88-residue polypeptide: Small ribosomal subunit protein uS15 (88 aa).

This sequence belongs to the universal ribosomal protein uS15 family. In terms of assembly, part of the 30S ribosomal subunit. Forms a bridge to the 50S subunit in the 70S ribosome, contacting the 23S rRNA.

One of the primary rRNA binding proteins, it binds directly to 16S rRNA where it helps nucleate assembly of the platform of the 30S subunit by binding and bridging several RNA helices of the 16S rRNA. In terms of biological role, forms an intersubunit bridge (bridge B4) with the 23S rRNA of the 50S subunit in the ribosome. The polypeptide is Small ribosomal subunit protein uS15 (Leptospira borgpetersenii serovar Hardjo-bovis (strain JB197)).